Here is a 283-residue protein sequence, read N- to C-terminus: Phosphatidylglycerol--prolipoprotein diacylglyceryl transferase (283 aa).

Transmembrane regions (helical) follow at residues 20–40, 60–80, 94–114, and 121–141; these read IGGF…IIGL, LVIW…VAFE, IWQG…AILV, and LSFW…QAIG. Position 142 (arginine 142) interacts with a 1,2-diacyl-sn-glycero-3-phospho-(1'-sn-glycerol). Helical transmembrane passes span 183-203, 214-234, and 248-268; these read FLYE…LFFY, GTIT…IEGL, and QVVS…LYLL.

Belongs to the Lgt family.

It is found in the cell inner membrane. The enzyme catalyses L-cysteinyl-[prolipoprotein] + a 1,2-diacyl-sn-glycero-3-phospho-(1'-sn-glycerol) = an S-1,2-diacyl-sn-glyceryl-L-cysteinyl-[prolipoprotein] + sn-glycerol 1-phosphate + H(+). The protein operates within protein modification; lipoprotein biosynthesis (diacylglyceryl transfer). Its function is as follows. Catalyzes the transfer of the diacylglyceryl group from phosphatidylglycerol to the sulfhydryl group of the N-terminal cysteine of a prolipoprotein, the first step in the formation of mature lipoproteins. The protein is Phosphatidylglycerol--prolipoprotein diacylglyceryl transferase of Synechocystis sp. (strain ATCC 27184 / PCC 6803 / Kazusa).